Here is a 436-residue protein sequence, read N- to C-terminus: Proline--tRNA ligase (436 aa).

The protein belongs to the class-II aminoacyl-tRNA synthetase family. ProS type 2 subfamily. In terms of assembly, homodimer.

The protein localises to the cytoplasm. The enzyme catalyses tRNA(Pro) + L-proline + ATP = L-prolyl-tRNA(Pro) + AMP + diphosphate. In terms of biological role, catalyzes the attachment of proline to tRNA(Pro) in a two-step reaction: proline is first activated by ATP to form Pro-AMP and then transferred to the acceptor end of tRNA(Pro). The chain is Proline--tRNA ligase from Neorickettsia sennetsu (strain ATCC VR-367 / Miyayama) (Ehrlichia sennetsu).